A 383-amino-acid polypeptide reads, in one-letter code: Trihelix transcription factor ASIL1 (383 aa).

4 disordered regions span residues 1–32 (MEDDDEIQSIPSPGDSSLSPQAPPSPPILPTN), 61–94 (HTPSVTGGGGSGNRNGRGGGGGSGGGGGGRDDCW), 189–295 (IASS…SGVG), and 346–383 (EITQNNQEEEERSRQRGERRIVDDDDDRNGKNNGNVSS). The segment covering 66–88 (TGGGGSGNRNGRGGGGGSGGGGG) has biased composition (gly residues). In terms of domain architecture, Myb-like spans 94-153 (WSEEATKVLIEAWGDRFSEPGKGTLKQQHWKEVAEIVNKSRQCKYPKTDIQCKNRIDTVK). Positions 206–225 (NSRSSMFKRQTKGNQIVQQQ) are enriched in polar residues. Basic and acidic residues predominate over residues 226 to 235 (QEKRGSDSMR). The short motif at 228-241 (KRGSDSMRWHFRKR) is the Bipartite nuclear localization signal element. Positions 246-262 (TESESDPEPEASPEESA) are enriched in acidic residues. Low complexity predominate over residues 263-274 (ESLPPLQPIQPL). Positions 304-365 (FTEAYEKAET…ERSRQRGERR (62 aa)) form a coiled coil. Positions 356-367 (ERSRQRGERRIV) are enriched in basic and acidic residues.

The protein resides in the nucleus. Functionally, transcription repressor that binds specific DNA sequence such as the GT-box-like motif 5'-CGTGATT-3' in the AT2S3 promoter. Negative regulator of seed maturation genes during seed germination and seedling development. May target GT-box-containing embryonic genes by competing with the binding of transcriptional activators to this promoter region. Contributes to the maintenance and control of seed filling and may repress the maturation program during early embryogenesis. In Arabidopsis thaliana (Mouse-ear cress), this protein is Trihelix transcription factor ASIL1.